We begin with the raw amino-acid sequence, 134 residues long: Small ribosomal subunit protein uS8c (134 aa).

The protein belongs to the universal ribosomal protein uS8 family. As to quaternary structure, part of the 30S ribosomal subunit.

The protein localises to the plastid. Its subcellular location is the chloroplast. In terms of biological role, one of the primary rRNA binding proteins, it binds directly to 16S rRNA central domain where it helps coordinate assembly of the platform of the 30S subunit. The polypeptide is Small ribosomal subunit protein uS8c (rps8) (Lepidium virginicum (Virginia pepperweed)).